The sequence spans 202 residues: Small ribosomal subunit protein uS2 (202 aa).

This sequence belongs to the universal ribosomal protein uS2 family.

The chain is Small ribosomal subunit protein uS2 (rps2) from Pyrococcus horikoshii (strain ATCC 700860 / DSM 12428 / JCM 9974 / NBRC 100139 / OT-3).